A 217-amino-acid chain; its full sequence is Lipid transferase CIDEA (217 aa).

One can recognise a CIDE-N domain in the interval 33 to 110 (PARPFRVSNH…ILEKGQKWTP (78 aa)). Residues 163–180 (CTSFKAVLRNLLRFMSYA) are amphipathic helix.

The protein belongs to the CIDE family. As to quaternary structure, homodimer. Interacts with CIDEC. Directly interacts with CEBPB. Interacts with isoform CLSTN3beta of CLSTN3; inhibiting the lipid transferase activity of CIDEA. In terms of tissue distribution, highly expressed in brown adipose tissue and, at lower levels, in white adipose tissue (at protein level). Undetectable in undifferentiated preadipocytes. Expressed in mammary gland during pregnancy and lactation, in epithelial cells, but not in the surrounding adipose tissue. Secreted into milk via milk fat globules.

The protein resides in the lipid droplet. It localises to the nucleus. It catalyses the reaction a triacyl-sn-glycerol(in) = a triacyl-sn-glycerol(out). Functionally, lipid transferase that promotes unilocular lipid droplet formation by mediating lipid droplet fusion. Lipid droplet fusion promotes their enlargement, restricting lipolysis and favoring lipid storage. Localizes on the lipid droplet surface, at focal contact sites between lipid droplets, and mediates atypical lipid droplet fusion by promoting directional net neutral lipid transfer from the smaller to larger lipid droplets. The transfer direction may be driven by the internal pressure difference between the contacting lipid droplet pair and occurs at a lower rate than that promoted by CIDEC. May also act as a CEBPB coactivator in epithelial cells to control the expression of a subset of CEBPB downstream target genes, including ID2, IGF1, PRLR, SOCS1, SOCS3, XDH, but not casein. By interacting with CEBPB, strengthens the association of CEBPB with the XDH promoter, increases histone acetylation and dissociates HDAC1 from the promoter. When overexpressed, induces apoptosis; the physiological significance of its role in apoptosis is unclear. This is Lipid transferase CIDEA from Mus musculus (Mouse).